The primary structure comprises 97 residues: Secreted Ly-6/uPAR domain-containing protein 2 (97 aa).

Residues 1-22 (MQFHTGLLLAAVLSLQLAAAQA) form the signal peptide. Residues 23-95 (LWCHQCTGFG…IACCQTSLCN (73 aa)) enclose the UPAR/Ly6 domain. Cystine bridges form between C25/C47, C28/C34, C40/C68, C72/C88, and C89/C94.

In terms of assembly, interacts with CHRNA3, CHRNA4, CHRNA5, CHRNA7, CHRNB2 and CHRNB4. Interacts with CHRM1 and CHRM3 probably in an allosteric manner.

The protein resides in the secreted. In terms of biological role, binds and may modulate the functional properties of nicotinic and muscarinic acetylcholine receptors. May regulate keratinocytes proliferation, differentiation and apoptosis. In vitro moderately inhibits ACh-evoked currents of alpha-3:beta-2-containing nAChRs, strongly these of alpha-4:beta-2-containing nAChRs, modulates alpha-7-containing nAChRs, and inhibits nicotine-induced signaling probably implicating alpha-3:beta-4-containing nAChRs. Proposed to act on alpha-3:beta-2 and alpha-7 nAChRs in an orthosteric, and on mAChRs, such as CHRM1 and CHRM3, in an allosteric manner. The polypeptide is Secreted Ly-6/uPAR domain-containing protein 2 (Macaca mulatta (Rhesus macaque)).